We begin with the raw amino-acid sequence, 159 residues long: Voltage-dependent N-type calcium channel subunit alpha-1B (159 aa).

The chain crosses the membrane as a helical span at residues 1-5 (LVTEI). An IV repeat occupies 1–159 (LVTEIADTDN…LMLNLFVAVI (159 aa)). Topologically, residues 6 to 13 (ADTDNFIN) are extracellular. Asn-13 carries N-linked (GlcNAc...) asparagine glycosylation. Residues 14–32 (LSFLRLFRAARLIKLLRQG) form a helical membrane-spanning segment. Over 33–51 (YTIRILLWTFVQSFKALPY) the chain is Cytoplasmic. Residues 52 to 71 (VCLLIAMLFFIYAIIGMQVF) traverse the membrane as a helical segment. At 72-135 (GNIALNDETS…LTKNECGSDF (64 aa)) the chain is on the extracellular side. The chain crosses the membrane as a helical span at residues 136 to 155 (AYFYFVSFIFLCSFLMLNLF). The Cytoplasmic segment spans residues 156 to 159 (VAVI).

Belongs to the calcium channel alpha-1 subunit (TC 1.A.1.11) family. CACNA1B subfamily. In terms of assembly, multisubunit complex consisting of alpha-1, alpha-2, beta and delta subunits in a 1:1:1:1 ratio. The channel activity is directed by the pore-forming and voltage-sensitive alpha-1 subunit. In many cases, this subunit is sufficient to generate voltage-sensitive calcium channel activity. The auxiliary subunits beta and alpha-2/delta linked by a disulfide bridge regulate the channel activity. Interacts with RIMBP2. Post-translationally, phosphorylated in vitro by CaM-kinase II, PKA, PKC and CGPK.

Its subcellular location is the membrane. It carries out the reaction Ca(2+)(in) = Ca(2+)(out). Functionally, voltage-sensitive calcium channels (VSCC) mediate the entry of calcium ions into excitable cells and are also involved in a variety of calcium-dependent processes, including muscle contraction, hormone or neurotransmitter release, gene expression, cell motility, cell division and cell death. This alpha-1B subunit gives rise to N-type calcium currents. N-type calcium channels belong to the 'high-voltage activated' (HVA) group. They are involved in pain signaling. Calcium channels containing alpha-1B subunit may play a role in directed migration of immature neurons. Mediates Ca(2+) release probability at hippocampal neuronal soma and synaptic terminals. The sequence is that of Voltage-dependent N-type calcium channel subunit alpha-1B (CACNA1B) from Gallus gallus (Chicken).